A 331-amino-acid chain; its full sequence is Isopenicillin N synthase (331 aa).

4 residues coordinate isopenicillin N: R87, Y91, S183, and Y189. N-[(5S)-5-amino-5-carboxypentanoyl]-L-cysteinyl-D-valine-binding residues include R87, Y91, S183, Y189, H214, and D216. The Fe2OG dioxygenase domain maps to L181–L288. Residues H214, D216, and H270 each contribute to the Fe(2+) site. R279 lines the 2-oxoglutarate pocket. S281 is an isopenicillin N binding site. S281 contacts N-[(5S)-5-amino-5-carboxypentanoyl]-L-cysteinyl-D-valine.

Belongs to the iron/ascorbate-dependent oxidoreductase family. It depends on Fe(2+) as a cofactor.

The protein localises to the cytoplasm. It localises to the cytosol. The enzyme catalyses N-[(5S)-5-amino-5-carboxypentanoyl]-L-cysteinyl-D-valine + O2 = isopenicillin N + 2 H2O. It functions in the pathway antibiotic biosynthesis; penicillin G biosynthesis; penicillin G from L-alpha-aminoadipate and L-cysteine and L-valine: step 2/3. Functionally, isopenicillin N synthase; part of the gene cluster that mediates the biosynthesis of penicillin, the world's most important antibiotic. The first step of the pathway is performed by the trimodular NRPS acvA that produces the tripeptide N-[(5S)-5-amino-5-carboxypentanoyl]-L-cysteinyl-D-valine (LLD-ACV or ACV) via condensation of the 3 residues L-2-aminoadipate, L-cysteine and L-valine. The precursor amino acids for penicillin biosynthesis are withdrawn from the vacuolar amino acid pool by the MFS-type transporter penV. Each of the constituent amino acids of the tripeptide acv are activated as aminoacyl-adenylates with peptide bonds formed through the participation of amino acid thioester intermediates. The tripeptide ACV is then cyclized to form isopenicillin N (IPN) by the isopenicillin N synthase ipnA that forms the beta-lactam nucleus. Finally, the alpha-aminoadipyl side chain is exchanged for phenylacetic acid by the isopenicillin N acyltransferase aatA to yield penicillin. This step occurs in the peroxisomal matrix and the penM and paaT transporters are involved in the isopenicillin N and phenylacetic acid import into the peroxisome, respectively. This chain is Isopenicillin N synthase, found in Penicillium rubens (strain ATCC 28089 / DSM 1075 / NRRL 1951 / Wisconsin 54-1255) (Penicillium chrysogenum).